The following is a 482-amino-acid chain: ATP synthase subunit beta, chloroplastic (482 aa).

Gly-162–Thr-169 provides a ligand contact to ATP.

It belongs to the ATPase alpha/beta chains family. In terms of assembly, F-type ATPases have 2 components, CF(1) - the catalytic core - and CF(0) - the membrane proton channel. CF(1) has five subunits: alpha(3), beta(3), gamma(1), delta(1), epsilon(1). CF(0) has four main subunits: a(1), b(1), b'(1) and c(9-12).

It localises to the plastid. It is found in the chloroplast thylakoid membrane. The catalysed reaction is ATP + H2O + 4 H(+)(in) = ADP + phosphate + 5 H(+)(out). In terms of biological role, produces ATP from ADP in the presence of a proton gradient across the membrane. The catalytic sites are hosted primarily by the beta subunits. The protein is ATP synthase subunit beta, chloroplastic of Pleurastrum terricola (Filamentous green alga).